The following is a 485-amino-acid chain: NADH-quinone oxidoreductase subunit N (485 aa).

14 consecutive transmembrane segments (helical) span residues 8–28, 35–55, 71–91, 105–125, 127–147, 159–179, 203–223, 235–255, 271–291, 297–317, 326–346, 373–393, 408–430, and 455–475; these read LIALLPLLIVGLTVVVVMLSI, FLNATLSVIGLNAALVSLWFV, GFAMLYTGLVLLASLATCTFA, FYLLVLIAALGGILLANANHL, SLFLGIELISLPLFGLVGYAF, YTILSAAASSFLLFGMALVYA, LLAGFGLMIVGLGFKLSLVPF, PAPVSTFLATASKIAIFGVVM, VVLAIIAFASIIFGNLMALSQ, LLGYSSISHLGYLLVALIALQ, VGVYLVGYLFSSLGAFGVVSL, AAVMTVMMLSLAGIPMTLGFI, WWLVGAVVVGSAIGLYYYLRVAV, and IVVLISALLVLVLGVWPQPLI.

This sequence belongs to the complex I subunit 2 family. In terms of assembly, NDH-1 is composed of 13 different subunits. Subunits NuoA, H, J, K, L, M, N constitute the membrane sector of the complex.

It is found in the cell inner membrane. It carries out the reaction a quinone + NADH + 5 H(+)(in) = a quinol + NAD(+) + 4 H(+)(out). In terms of biological role, NDH-1 shuttles electrons from NADH, via FMN and iron-sulfur (Fe-S) centers, to quinones in the respiratory chain. The immediate electron acceptor for the enzyme in this species is believed to be ubiquinone. Couples the redox reaction to proton translocation (for every two electrons transferred, four hydrogen ions are translocated across the cytoplasmic membrane), and thus conserves the redox energy in a proton gradient. This is NADH-quinone oxidoreductase subunit N from Escherichia coli O1:K1 / APEC.